Reading from the N-terminus, the 55-residue chain is Large ribosomal subunit protein bL33 (55 aa).

Belongs to the bacterial ribosomal protein bL33 family.

The protein is Large ribosomal subunit protein bL33 of Methylobacterium sp. (strain 4-46).